The primary structure comprises 434 residues: UDP-N-acetylmuramoylalanine--D-glutamate ligase (434 aa).

113–119 (GSNGKST) is an ATP binding site.

Belongs to the MurCDEF family.

It localises to the cytoplasm. It catalyses the reaction UDP-N-acetyl-alpha-D-muramoyl-L-alanine + D-glutamate + ATP = UDP-N-acetyl-alpha-D-muramoyl-L-alanyl-D-glutamate + ADP + phosphate + H(+). It functions in the pathway cell wall biogenesis; peptidoglycan biosynthesis. Functionally, cell wall formation. Catalyzes the addition of glutamate to the nucleotide precursor UDP-N-acetylmuramoyl-L-alanine (UMA). The polypeptide is UDP-N-acetylmuramoylalanine--D-glutamate ligase (Pasteurella multocida (strain Pm70)).